Reading from the N-terminus, the 173-residue chain is MPRTQRNDNFIDKTFTVMADIILKVVPFNKKAKEAFVYYRDGMSAQADGEYKEALDNYYEALKLEDDANDRSYILYNIGIIHGSNGEHERALEYYHEAIELNPNLPSALNNIAVIYHYQGERAKEEGREDESEALFDKAAEYWKQAIRLAPNNYIEAQNWLKVTGRSEMDVFF.

TPR repeat units follow at residues 35–68 (AFVYYRDGMSAQADGEYKEALDNYYEALKLEDDA), 72–105 (SYILYNIGIIHGSNGEHERALEYYHEAIELNPNL), and 120–153 (GERAKEEGREDESEALFDKAAEYWKQAIRLAPNN).

Belongs to the Ycf3 family.

It localises to the cellular thylakoid membrane. In terms of biological role, essential for the assembly of the photosystem I (PSI) complex. May act as a chaperone-like factor to guide the assembly of the PSI subunits. This chain is Photosystem I assembly protein Ycf3, found in Gloeothece citriformis (strain PCC 7424) (Cyanothece sp. (strain PCC 7424)).